Here is a 218-residue protein sequence, read N- to C-terminus: GEM-like protein 6 (218 aa).

The region spanning 96 to 174 (KIYKRLFKVC…CKINGVNQSQ (79 aa)) is the GRAM domain.

It belongs to the GEM family.

This chain is GEM-like protein 6, found in Arabidopsis thaliana (Mouse-ear cress).